Reading from the N-terminus, the 585-residue chain is 4-hydroxy-3-methylbut-2-en-1-yl diphosphate synthase (flavodoxin) (585 aa).

Cys492, Cys495, Cys526, and Glu533 together coordinate [4Fe-4S] cluster.

This sequence belongs to the IspG family. [4Fe-4S] cluster serves as cofactor.

It catalyses the reaction (2E)-4-hydroxy-3-methylbut-2-enyl diphosphate + oxidized [flavodoxin] + H2O + 2 H(+) = 2-C-methyl-D-erythritol 2,4-cyclic diphosphate + reduced [flavodoxin]. It participates in isoprenoid biosynthesis; isopentenyl diphosphate biosynthesis via DXP pathway; isopentenyl diphosphate from 1-deoxy-D-xylulose 5-phosphate: step 5/6. Its function is as follows. Converts 2C-methyl-D-erythritol 2,4-cyclodiphosphate (ME-2,4cPP) into 1-hydroxy-2-methyl-2-(E)-butenyl 4-diphosphate. This Akkermansia muciniphila (strain ATCC BAA-835 / DSM 22959 / JCM 33894 / BCRC 81048 / CCUG 64013 / CIP 107961 / Muc) protein is 4-hydroxy-3-methylbut-2-en-1-yl diphosphate synthase (flavodoxin).